The chain runs to 235 residues: Glycerol-3-phosphate acyltransferase (235 aa).

6 helical membrane passes run 4–24, 56–76, 94–114, 124–144, 152–172, and 191–211; these read LLAILAVSYLIGSIPTGIMAG, TVTLIDIIKGVVAAVSVVAFF, LLAGMSAVVGHVFTVFAGFKG, MLIGIAPVSMLMVIGIFLLTI, VASMLAAVAFPLIIAIRKYIF, and FHDSLDYHLMIFGLIVALGIL.

The protein belongs to the PlsY family. As to quaternary structure, probably interacts with PlsX.

Its subcellular location is the cell inner membrane. It carries out the reaction an acyl phosphate + sn-glycerol 3-phosphate = a 1-acyl-sn-glycero-3-phosphate + phosphate. Its pathway is lipid metabolism; phospholipid metabolism. Its function is as follows. Catalyzes the transfer of an acyl group from acyl-phosphate (acyl-PO(4)) to glycerol-3-phosphate (G3P) to form lysophosphatidic acid (LPA). This enzyme utilizes acyl-phosphate as fatty acyl donor, but not acyl-CoA or acyl-ACP. The sequence is that of Glycerol-3-phosphate acyltransferase from Chlorobium limicola (strain DSM 245 / NBRC 103803 / 6330).